A 426-amino-acid polypeptide reads, in one-letter code: MLDSKLLRGQLQEVADRLASRGFSLDVARIESLEERRKAVQTRTEQLQAERNARSKSIGQAKAKGEDIAPLMADVERMANELAAGKLELDGIQAELDGILLTIPNLPDASVPVGASEDDNVEVRRWGTPKAFDFEIKDHVALGEVSGGLDFEAAAKLSGARFAVLRGPIARLHRALAQFMINLHTGEHGYEEHYTPYLVQAPALQGTGQLPKFEEDLFKITREGEADFYLIPTAEVSLTNLVAGEILDAKQLPLKLVAHTPCFRSEAGASGRDTRGMIRQHQFDKVEMVQVVEPAKSMEALEGLTANAERVLQLLELPYRVLALCTGDMGFGAVKTYDLEVWVPSQDKYREISSCSNCGDFQARRMQARWRNPETGKPELVHTLNGSGLAVGRTLVAVLENYQQADGSILVPEVLKPYMGGVEVIR.

233–235 (TAE) provides a ligand contact to L-serine. 264 to 266 (RSE) contributes to the ATP binding site. Position 287 (Glu-287) interacts with L-serine. 351–354 (EISS) contributes to the ATP binding site. Ser-387 is an L-serine binding site.

It belongs to the class-II aminoacyl-tRNA synthetase family. Type-1 seryl-tRNA synthetase subfamily. In terms of assembly, homodimer. The tRNA molecule binds across the dimer.

It is found in the cytoplasm. It carries out the reaction tRNA(Ser) + L-serine + ATP = L-seryl-tRNA(Ser) + AMP + diphosphate + H(+). The catalysed reaction is tRNA(Sec) + L-serine + ATP = L-seryl-tRNA(Sec) + AMP + diphosphate + H(+). It participates in aminoacyl-tRNA biosynthesis; selenocysteinyl-tRNA(Sec) biosynthesis; L-seryl-tRNA(Sec) from L-serine and tRNA(Sec): step 1/1. Functionally, catalyzes the attachment of serine to tRNA(Ser). Is also able to aminoacylate tRNA(Sec) with serine, to form the misacylated tRNA L-seryl-tRNA(Sec), which will be further converted into selenocysteinyl-tRNA(Sec). The chain is Serine--tRNA ligase from Pseudomonas putida (strain GB-1).